We begin with the raw amino-acid sequence, 149 residues long: Transcriptional repressor NrdR (149 aa).

Residues 3-34 (CPFCGTQDTKVIDSRLVADGASVRRRRECNHC) fold into a zinc finger. Residues 49–139 (PRVIKTDGSR…VYRSFEDIRE (91 aa)) enclose the ATP-cone domain.

It belongs to the NrdR family. It depends on Zn(2+) as a cofactor.

Functionally, negatively regulates transcription of bacterial ribonucleotide reductase nrd genes and operons by binding to NrdR-boxes. The chain is Transcriptional repressor NrdR from Idiomarina loihiensis (strain ATCC BAA-735 / DSM 15497 / L2-TR).